A 1211-amino-acid polypeptide reads, in one-letter code: DNA-directed RNA polymerase subunit beta' (1211 aa).

Zn(2+) contacts are provided by Cys60, Cys62, Cys75, and Cys78. Residues Asp450, Asp452, and Asp454 each contribute to the Mg(2+) site. Positions 819, 893, 900, and 903 each coordinate Zn(2+).

This sequence belongs to the RNA polymerase beta' chain family. In terms of assembly, the RNAP catalytic core consists of 2 alpha, 1 beta, 1 beta' and 1 omega subunit. When a sigma factor is associated with the core the holoenzyme is formed, which can initiate transcription. Mg(2+) is required as a cofactor. Zn(2+) serves as cofactor.

It catalyses the reaction RNA(n) + a ribonucleoside 5'-triphosphate = RNA(n+1) + diphosphate. DNA-dependent RNA polymerase catalyzes the transcription of DNA into RNA using the four ribonucleoside triphosphates as substrates. The chain is DNA-directed RNA polymerase subunit beta' from Streptococcus equi subsp. zooepidemicus (strain H70).